A 470-amino-acid polypeptide reads, in one-letter code: Zinc finger protein pat-9 (470 aa).

The disordered stretch occupies residues 1 to 25 (MENRTPMQHHSGYEIVKSEPPSTPK). 3 C2H2-type zinc fingers span residues 84-106 (YPCN…QNSH), 112-134 (FECD…KRIH), and 140-162 (FVCT…KDMH). The disordered stretch occupies residues 191-235 (MEQEENGGLPASSSASSVISHPLITTTSGNKKRSKAAKAKQTPSS). Residues 221 to 230 (KKRSKAAKAK) carry the Nuclear localization signal motif.

The protein belongs to the krueppel C2H2-type zinc-finger protein family. Expressed in body wall muscle and gonad (at protein level).

Its subcellular location is the nucleus. It is found in the chromosome. Functionally, probable transcription factor; required for proper organization of muscle myofilaments and for their recruitment to the M line. The chain is Zinc finger protein pat-9 from Caenorhabditis elegans.